The chain runs to 528 residues: Na(+)/H(+) antiporter NhaB (528 aa).

10 helical membrane passes run valine 11–isoleucine 31, proline 67–leucine 87, leucine 98–phenylalanine 118, alanine 140–isoleucine 160, phenylalanine 240–valine 260, leucine 311–isoleucine 331, glutamate 350–isoleucine 370, leucine 391–glycine 411, alanine 449–isoleucine 469, and methionine 476–glutamate 496.

The protein belongs to the NhaB Na(+)/H(+) (TC 2.A.34) antiporter family.

The protein resides in the cell inner membrane. It catalyses the reaction 2 Na(+)(in) + 3 H(+)(out) = 2 Na(+)(out) + 3 H(+)(in). Na(+)/H(+) antiporter that extrudes sodium in exchange for external protons. This chain is Na(+)/H(+) antiporter NhaB, found in Shewanella denitrificans (strain OS217 / ATCC BAA-1090 / DSM 15013).